A 166-amino-acid chain; its full sequence is Endoribonuclease YbeY (166 aa).

Residues His-132, His-136, and His-142 each coordinate Zn(2+).

Belongs to the endoribonuclease YbeY family. Zn(2+) serves as cofactor.

The protein resides in the cytoplasm. Single strand-specific metallo-endoribonuclease involved in late-stage 70S ribosome quality control and in maturation of the 3' terminus of the 16S rRNA. The chain is Endoribonuclease YbeY from Clostridium botulinum (strain Eklund 17B / Type B).